The sequence spans 2037 residues: Fatty acid synthase subunit beta (2037 aa).

The segment at 1 to 453 is acetyltransferase; it reads MSTHRPFQLT…VYDTFDGSDF (453 aa). The For acetyltransferase activity role is filled by S261. The segment at 465-798 is enoyl reductase; that stretch reads VKLITELPVH…GSRVMTSKES (334 aa). Positions 1132–1612 are dehydratase; sequence GTELNWLQAF…LPNDTLQTTM (481 aa). The MaoC-like domain occupies 1506–1634; sequence NGKTIEESVI…KVETRNVETE (129 aa). The malonyl/palmitoyl transferase stretch occupies residues 1613–1833; it reads EHVGMINGRK…MTMQVAVPRD (221 aa). The active-site For malonyltransferase activity is the S1796.

It belongs to the fungal fatty acid synthetase subunit beta family. In terms of assembly, [Alpha(6)beta(6)] hexamers of two multifunctional subunits (alpha and beta).

It catalyses the reaction acetyl-CoA + n malonyl-CoA + 2n NADPH + 4n H(+) = a long-chain-acyl-CoA + n CoA + n CO2 + 2n NADP(+).. The enzyme catalyses holo-[ACP] + acetyl-CoA = acetyl-[ACP] + CoA. The catalysed reaction is holo-[ACP] + malonyl-CoA = malonyl-[ACP] + CoA. It carries out the reaction a (3R)-hydroxyacyl-[ACP] = a (2E)-enoyl-[ACP] + H2O. It catalyses the reaction a 2,3-saturated acyl-[ACP] + NAD(+) = a (2E)-enoyl-[ACP] + NADH + H(+). The enzyme catalyses (9Z)-octadecenoyl-[ACP] + H2O = (9Z)-octadecenoate + holo-[ACP] + H(+). Its function is as follows. Fatty acid synthetase catalyzes the formation of long-chain fatty acids from acetyl-CoA, malonyl-CoA and NADPH. The beta subunit contains domains for: [acyl-carrier-protein] acetyltransferase and malonyltransferase, S-acyl fatty acid synthase thioesterase, enoyl-[acyl-carrier-protein] reductase, and 3-hydroxypalmitoyl-[acyl-carrier-protein] dehydratase. The protein is Fatty acid synthase subunit beta (FAS1) of Candida albicans (Yeast).